The following is a 174-amino-acid chain: Granulocyte colony-stimulating factor (174 aa).

Disulfide bonds link cysteine 36–cysteine 42 and cysteine 64–cysteine 74. Residue threonine 133 is glycosylated (O-linked (GalNAc...) threonine).

The protein belongs to the IL-6 superfamily. As to quaternary structure, monomer. O-glycosylated.

It localises to the secreted. Its function is as follows. Granulocyte/macrophage colony-stimulating factors are cytokines that act in hematopoiesis by controlling the production, differentiation, and function of 2 related white cell populations of the blood, the granulocytes and the monocytes-macrophages. This CSF induces granulocytes. In Ovis aries (Sheep), this protein is Granulocyte colony-stimulating factor (CSF3).